A 206-amino-acid chain; its full sequence is Guanylate kinase (206 aa).

One can recognise a Guanylate kinase-like domain in the interval 5–183 (FNLLILSGPS…SKEIILSIAK (179 aa)). Residue 12–19 (GPSGAGKS) coordinates ATP.

The protein belongs to the guanylate kinase family.

The protein localises to the cytoplasm. It catalyses the reaction GMP + ATP = GDP + ADP. Essential for recycling GMP and indirectly, cGMP. This is Guanylate kinase (gmk) from Helicobacter pylori (strain ATCC 700392 / 26695) (Campylobacter pylori).